A 468-amino-acid polypeptide reads, in one-letter code: Argininosuccinate lyase (468 aa).

Belongs to the lyase 1 family. Argininosuccinate lyase subfamily.

It localises to the cytoplasm. The enzyme catalyses 2-(N(omega)-L-arginino)succinate = fumarate + L-arginine. It functions in the pathway amino-acid biosynthesis; L-arginine biosynthesis; L-arginine from L-ornithine and carbamoyl phosphate: step 3/3. The sequence is that of Argininosuccinate lyase from Hahella chejuensis (strain KCTC 2396).